The sequence spans 196 residues: Putative 3-methyladenine DNA glycosylase (196 aa).

It belongs to the DNA glycosylase MPG family.

The polypeptide is Putative 3-methyladenine DNA glycosylase (yxlJ) (Bacillus subtilis (strain 168)).